A 432-amino-acid polypeptide reads, in one-letter code: uncharacterized protein (432 aa).

Helical transmembrane passes span Phe7–Tyr27, Gly29–Val49, Glu68–Ala88, Phe124–Gly144, Phe156–Ser176, Val196–Phe216, Leu241–Phe261, Phe266–Val286, Lys291–Val311, Ile326–Leu346, Ile358–Ala378, Val379–Val399, and Ile412–Leu432.

The protein belongs to the CitM (TC 2.A.11) transporter family.

The protein resides in the cell membrane. This is an uncharacterized protein from Methanocaldococcus jannaschii (strain ATCC 43067 / DSM 2661 / JAL-1 / JCM 10045 / NBRC 100440) (Methanococcus jannaschii).